The primary structure comprises 305 residues: Protein EXORDIUM-like 2 (305 aa).

Residues 1-23 (MASNYRFAIFLTLFFATAGFSAA) form the signal peptide. A glycan (N-linked (GlcNAc...) asparagine) is linked at N44.

The protein belongs to the EXORDIUM family.

It localises to the secreted. It is found in the extracellular space. The protein localises to the apoplast. Its function is as follows. May play a role in a brassinosteroid-dependent regulation of growth and development. The polypeptide is Protein EXORDIUM-like 2 (EXL2) (Arabidopsis thaliana (Mouse-ear cress)).